A 103-amino-acid polypeptide reads, in one-letter code: Histone H4 (103 aa).

A disordered region spans residues Met1–Ile32. The span at Gly10–Gln25 shows a compositional bias: basic residues. Lys16 carries the post-translational modification N6-acetyl-N6-methyllysine; alternate. Lys16 carries the post-translational modification N6-methyllysine; alternate. Residues Lys20 to Lys24 mediate DNA binding. Lys94 carries the post-translational modification N6-glutaryllysine.

The protein belongs to the histone H4 family. As to quaternary structure, the nucleosome is a histone octamer containing two molecules each of H2A, H2B, H3 and H4 assembled in one H3-H4 heterotetramer and two H2A-H2B heterodimers. The octamer wraps approximately 147 bp of DNA. Glutarylation at Lys-94 (H4K91glu) destabilizes nucleosomes by promoting dissociation of the H2A-H2B dimers from nucleosomes.

It localises to the nucleus. Its subcellular location is the chromosome. In terms of biological role, core component of nucleosome. Nucleosomes wrap and compact DNA into chromatin, limiting DNA accessibility to the cellular machineries which require DNA as a template. Histones thereby play a central role in transcription regulation, DNA repair, DNA replication and chromosomal stability. DNA accessibility is regulated via a complex set of post-translational modifications of histones, also called histone code, and nucleosome remodeling. The sequence is that of Histone H4 (HHF1) from Encephalitozoon cuniculi (strain GB-M1) (Microsporidian parasite).